The chain runs to 782 residues: Anoctamin-9 (782 aa).

Residues 1 to 198 are Cytoplasmic-facing; the sequence is MQGEESLRIL…LYFVWLGWYT (198 aa). A helical membrane pass occupies residues 199–219; sequence YMLVPAALTGLLVFLSGFSLF. Over 220 to 264 the chain is Extracellular; the sequence is EASQISKEICEAHDILMCPLGDHSRRYQRLSETCTFAKLTHLFDN. Position 250 is a phosphoserine; by PKA (Ser250). Residues 265-285 traverse the membrane as a helical segment; that stretch reads DGTVVFAIFMALWATVFLEIW. At 286–331 the chain is on the cytoplasmic side; the sequence is KRQRARVVLHWDLYVWDEEQEEMALQLINCPDYKLRPYQHSYLRST. Residues 332–352 traverse the membrane as a helical segment; the sequence is VILVLTLLMICLMIGMAHVLV. The Extracellular segment spans residues 353 to 373; sequence VYRVLASALFSSSAVPFLEEQ. A helical membrane pass occupies residues 374–394; the sequence is VTTAVVVTGALVHYVTIIIMT. Residues 395–423 are Cytoplasmic-facing; that stretch reads KINRCVALKLCDFEMPRTFSERESRFTIR. The helical transmembrane segment at 424–444 threads the bilayer; it reads FFTLQFFTHFSSLIYIAFILG. At 445–552 the chain is on the extracellular side; the sequence is RINGHPGKST…EMMIQYGFTT (108 aa). A helical membrane pass occupies residues 553 to 573; it reads IFVAAFPLAPLLALFSNLVEI. Over 574–604 the chain is Cytoplasmic; the sequence is RLDAIKMVWLQRRLVPRKAKDIGTWLQVLET. A helical transmembrane segment spans residues 605 to 625; it reads IGVLAVIANGMVIAFTSEFIP. The Extracellular portion of the chain corresponds to 626 to 703; it reads RVVYKYRYSP…QFWFLLAIRL (78 aa). N-linked (GlcNAc...) asparagine glycosylation is found at Asn641, Asn652, Asn674, and Asn690. A helical transmembrane segment spans residues 704–724; that stretch reads AFVILFEHVALCIKLIAAWFV. The Cytoplasmic segment spans residues 725-782; it reads PDIPQSVKNKVLEVKYQRLREKMWHGRQRLGGVGAGSRPPMPAHPTPASIFSARSTDV. The segment at 756-782 is disordered; sequence GVGAGSRPPMPAHPTPASIFSARSTDV.

This sequence belongs to the anoctamin family. Post-translationally, phosphorylated on serine residues by cAMP-dependent protein kinase A (PKA) which is essential for activation of its cation channel activity. Expressed in the kidney. Expressed in the olfactory epithelium.

It is found in the cell membrane. It localises to the endoplasmic reticulum. It catalyses the reaction a 1,2-diacyl-sn-glycero-3-phospho-L-serine(in) = a 1,2-diacyl-sn-glycero-3-phospho-L-serine(out). The catalysed reaction is a beta-D-galactosyl-(1&lt;-&gt;1')-N-acylsphing-4-enine(out) = a beta-D-galactosyl-(1&lt;-&gt;1')-N-acylsphing-4-enine(in). The enzyme catalyses a 1,2-diacyl-sn-glycero-3-phosphocholine(in) = a 1,2-diacyl-sn-glycero-3-phosphocholine(out). It carries out the reaction Ca(2+)(in) = Ca(2+)(out). It catalyses the reaction Na(+)(in) = Na(+)(out). The catalysed reaction is K(+)(in) = K(+)(out). With respect to regulation, cation channel activity is activated via phosphorylation on serine residues by cAMP-dependent protein kinase A (PKA). Functionally, PKA-activated nonselective cation channel. Discriminates poorly among cations but is more permeable to Ca(2+) ions than to monovalent cations. Acts as a calcium-activated calcium permeable channel which may operate as a endoplasmic reticulum (ER) Ca(2+)-leak channel, reducing the loading of the ER Ca(2+) store. Regulates intracellular Ca2+ signals, ion channel activity, and cytokine release in the renal tissue. Plays an important role in olfaction, amplifying cAMP-evoked cyclic nucleotide-gated (CNG) channel currents in the olfactory sensory neurons. Has calcium-dependent phospholipid scramblase activity; scrambles phosphatidylserine, phosphatidylcholine and galactosylceramide. Does not exhibit calcium-activated chloride channel (CaCC) activity. Can inhibit the activity of ANO1. This Homo sapiens (Human) protein is Anoctamin-9 (ANO9).